The chain runs to 333 residues: Electron transfer flavoprotein subunit alpha, mitochondrial (333 aa).

The transit peptide at 1–19 (MFRAAAPGQLRRAASLLRF) directs the protein to the mitochondrion. Residues 20–204 (QSTLVIAEHA…GISEWLDQKL (185 aa)) are domain I. Residue Lys-59 is modified to N6-acetyllysine; alternate. Lys-59 carries the post-translational modification N6-succinyllysine; alternate. Position 62 is an N6-acetyllysine (Lys-62). At Lys-69 the chain carries N6-acetyllysine; alternate. At Lys-69 the chain carries N6-succinyllysine; alternate. Residue Lys-75 is modified to N6-acetyllysine. Lys-85 bears the N6-acetyllysine; alternate mark. Lys-85 bears the N6-succinyllysine; alternate mark. Thr-93 carries the post-translational modification Phosphothreonine. Lys-101 and Lys-139 each carry N6-acetyllysine. At Ser-140 the chain carries Phosphoserine. At Lys-158 the chain carries N6-acetyllysine; alternate. Lys-158 carries the post-translational modification N6-succinyllysine; alternate. Lys-164 carries the post-translational modification N6-acetyllysine. N6-succinyllysine is present on Lys-187. Lys-203 bears the N6-acetyllysine; alternate mark. Position 203 is an N6-succinyllysine; alternate (Lys-203). The tract at residues 205–333 (TKSDRPELTG…PEMTEILKKK (129 aa)) is domain II. Lys-216 bears the N6-succinyllysine mark. Position 223 (Arg-223) interacts with FAD. Residues Lys-226 and Lys-232 each carry the N6-acetyllysine; alternate modification. Residues Lys-226 and Lys-232 each carry the N6-succinyllysine; alternate modification. Residues Ser-248, 263 to 266 (VGQT), 281 to 286 (SGAIQH), and Asn-300 contribute to the FAD site. Residue Lys-301 is modified to N6-succinyllysine. Residue 318–319 (DL) coordinates FAD.

Belongs to the ETF alpha-subunit/FixB family. In terms of assembly, heterodimer composed of ETFA and ETFB. Identified in a complex that contains ETFA, ETFB and ETFRF1. Interaction with ETFRF1 promotes dissociation of the bound FAD and loss of electron transfer activity. Interacts with TASOR. Requires FAD as cofactor. As to expression, expressed in the spermatogonia, spermatocytes, ovary and granular cells within the cerebellum.

The protein resides in the mitochondrion matrix. Heterodimeric electron transfer flavoprotein that accepts electrons from several mitochondrial dehydrogenases, including acyl-CoA dehydrogenases, glutaryl-CoA and sarcosine dehydrogenase. It transfers the electrons to the main mitochondrial respiratory chain via ETF-ubiquinone oxidoreductase (ETF dehydrogenase). Required for normal mitochondrial fatty acid oxidation and normal amino acid metabolism. In Mus musculus (Mouse), this protein is Electron transfer flavoprotein subunit alpha, mitochondrial (Etfa).